We begin with the raw amino-acid sequence, 155 residues long: MRLRLIAVGSRMPKWVEEGWHEYAKRLPSELALELVEIPLNTRGKNADVARLIRQEGEAMLSKVQPGERIVTLEVHGKPWSTEQLAGELDRWRLDARTVNLMVGGPEGLAPEVCARSEQRWSLSPLTLPHPLVRILIGEQIYRAWTVLSGHPYHK.

S-adenosyl-L-methionine-binding positions include leucine 73, glycine 104, and 123–128; that span reads LSPLTL.

The protein belongs to the RNA methyltransferase RlmH family. As to quaternary structure, homodimer.

The protein resides in the cytoplasm. The enzyme catalyses pseudouridine(1915) in 23S rRNA + S-adenosyl-L-methionine = N(3)-methylpseudouridine(1915) in 23S rRNA + S-adenosyl-L-homocysteine + H(+). Specifically methylates the pseudouridine at position 1915 (m3Psi1915) in 23S rRNA. The polypeptide is Ribosomal RNA large subunit methyltransferase H (Pseudomonas entomophila (strain L48)).